The sequence spans 779 residues: Endonuclease MutS2 (779 aa).

An ATP-binding site is contributed by 328–335; it reads GPNTGGKT. The 76-residue stretch at 704-779 folds into the Smr domain; that stretch reads LDLRGKRYEE…GSGATIVTLG (76 aa).

This sequence belongs to the DNA mismatch repair MutS family. MutS2 subfamily. Homodimer. Binds to stalled ribosomes, contacting rRNA.

Endonuclease that is involved in the suppression of homologous recombination and thus may have a key role in the control of bacterial genetic diversity. In terms of biological role, acts as a ribosome collision sensor, splitting the ribosome into its 2 subunits. Detects stalled/collided 70S ribosomes which it binds and splits by an ATP-hydrolysis driven conformational change. Acts upstream of the ribosome quality control system (RQC), a ribosome-associated complex that mediates the extraction of incompletely synthesized nascent chains from stalled ribosomes and their subsequent degradation. Probably generates substrates for RQC. In Streptococcus pyogenes serotype M5 (strain Manfredo), this protein is Endonuclease MutS2.